A 435-amino-acid polypeptide reads, in one-letter code: Gamma-glutamyl phosphate reductase (435 aa).

Belongs to the gamma-glutamyl phosphate reductase family.

It is found in the cytoplasm. It carries out the reaction L-glutamate 5-semialdehyde + phosphate + NADP(+) = L-glutamyl 5-phosphate + NADPH + H(+). The protein operates within amino-acid biosynthesis; L-proline biosynthesis; L-glutamate 5-semialdehyde from L-glutamate: step 2/2. Catalyzes the NADPH-dependent reduction of L-glutamate 5-phosphate into L-glutamate 5-semialdehyde and phosphate. The product spontaneously undergoes cyclization to form 1-pyrroline-5-carboxylate. The polypeptide is Gamma-glutamyl phosphate reductase (Parasynechococcus marenigrum (strain WH8102)).